A 509-amino-acid polypeptide reads, in one-letter code: ATP synthase subunit alpha (509 aa).

169 to 176 (GDRQTGKT) is a binding site for ATP.

It belongs to the ATPase alpha/beta chains family. As to quaternary structure, F-type ATPases have 2 components, CF(1) - the catalytic core - and CF(0) - the membrane proton channel. CF(1) has five subunits: alpha(3), beta(3), gamma(1), delta(1), epsilon(1). CF(0) has four main subunits: a(1), b(1), b'(1) and c(9-12).

It localises to the cell inner membrane. The enzyme catalyses ATP + H2O + 4 H(+)(in) = ADP + phosphate + 5 H(+)(out). Functionally, produces ATP from ADP in the presence of a proton gradient across the membrane. The alpha chain is a regulatory subunit. The protein is ATP synthase subunit alpha of Bradyrhizobium sp. (strain ORS 278).